The following is a 329-amino-acid chain: Intradiol ring-cleavage dioxygenase hqdA (329 aa).

Positions 167, 201, 225, and 227 each coordinate Fe cation.

Belongs to the intradiol ring-cleavage dioxygenase family. Homodimer. The cofactor is Fe(3+).

It carries out the reaction catechol + O2 = cis,cis-muconate + 2 H(+). It catalyses the reaction benzene-1,2,4-triol + O2 = maleylacetate + 2 H(+). Functionally, intradiol ring-cleavage dioxygenase involved in an alternative pathway to the protocatechuic acid pathway since it is active on hydroxyquinol and catechol but not on protocatechuic acid. This Aspergillus niger (strain ATCC MYA-4892 / CBS 513.88 / FGSC A1513) protein is Intradiol ring-cleavage dioxygenase hqdA.